A 201-amino-acid chain; its full sequence is dITP/XTP pyrophosphatase (201 aa).

8 to 13 contacts substrate; it reads TNNENK. Mg(2+)-binding residues include Glu41 and Asp73. Asp73 functions as the Proton acceptor in the catalytic mechanism. Substrate-binding positions include Ser74, 154-157, Lys177, and 182-183; these read FGYD and HR.

Belongs to the HAM1 NTPase family. Homodimer. Mg(2+) is required as a cofactor.

It carries out the reaction XTP + H2O = XMP + diphosphate + H(+). The enzyme catalyses dITP + H2O = dIMP + diphosphate + H(+). It catalyses the reaction ITP + H2O = IMP + diphosphate + H(+). Functionally, pyrophosphatase that catalyzes the hydrolysis of nucleoside triphosphates to their monophosphate derivatives, with a high preference for the non-canonical purine nucleotides XTP (xanthosine triphosphate), dITP (deoxyinosine triphosphate) and ITP. Seems to function as a house-cleaning enzyme that removes non-canonical purine nucleotides from the nucleotide pool, thus preventing their incorporation into DNA/RNA and avoiding chromosomal lesions. This Clostridium tetani (strain Massachusetts / E88) protein is dITP/XTP pyrophosphatase.